The primary structure comprises 353 residues: MMKKISKVVLAVGGTGGHIIPALAARETFIKEKVEVLLLGKGLTRFLEGEPDVLYYDIPSGSPFSLRPNQMFSGARQLYQGYTAALRMIKSFAPDVAVGFGSYHSLPAILASIRKRIPLFLHEQNVVPGKVNKLFSHFAKGVGMSFSAAGEHFRCRAEEVFLPIREPSEQIVFPEASPVICVVGGSQGAKILNDCVPKALAYVREKHANLYVHHIVGPKGDLEGVSRVYQDAGIQHKVTFFEKNILGVLQASDLVIGRAGATILNELLWVQVPAILIPYPGAHGHQEANAKFFTQTLGGGTMILQKHLTEESLRKQVLLALDPATSENRRKAMLDAQKNKSFKSLYQFICESL.

Residues 15–17, Asn125, Arg165, Ser186, and Gln286 each bind UDP-N-acetyl-alpha-D-glucosamine; that span reads TGG.

Belongs to the glycosyltransferase 28 family. MurG subfamily.

The protein resides in the cell inner membrane. The enzyme catalyses di-trans,octa-cis-undecaprenyl diphospho-N-acetyl-alpha-D-muramoyl-L-alanyl-D-glutamyl-meso-2,6-diaminopimeloyl-D-alanyl-D-alanine + UDP-N-acetyl-alpha-D-glucosamine = di-trans,octa-cis-undecaprenyl diphospho-[N-acetyl-alpha-D-glucosaminyl-(1-&gt;4)]-N-acetyl-alpha-D-muramoyl-L-alanyl-D-glutamyl-meso-2,6-diaminopimeloyl-D-alanyl-D-alanine + UDP + H(+). Its pathway is cell wall biogenesis; peptidoglycan biosynthesis. Functionally, cell wall formation. Catalyzes the transfer of a GlcNAc subunit on undecaprenyl-pyrophosphoryl-MurNAc-pentapeptide (lipid intermediate I) to form undecaprenyl-pyrophosphoryl-MurNAc-(pentapeptide)GlcNAc (lipid intermediate II). This Chlamydia muridarum (strain MoPn / Nigg) protein is UDP-N-acetylglucosamine--N-acetylmuramyl-(pentapeptide) pyrophosphoryl-undecaprenol N-acetylglucosamine transferase.